A 748-amino-acid polypeptide reads, in one-letter code: Glucans biosynthesis glucosyltransferase H (748 aa).

A run of 7 helical transmembrane segments spans residues 85–107 (LIVR…GYGM), 127–149 (FLVL…FVLL), 443–465 (GIGS…LISL), 494–516 (AWVF…LVLI), 529–551 (GRVL…CMMI), 587–606 (LAGP…SVSL), and 608–630 (LLLW…IMTS).

Belongs to the glycosyltransferase 2 family. OpgH subfamily.

Its subcellular location is the cell inner membrane. It functions in the pathway glycan metabolism; osmoregulated periplasmic glucan (OPG) biosynthesis. Involved in the biosynthesis of osmoregulated periplasmic glucans (OPGs). This Bradyrhizobium diazoefficiens (strain JCM 10833 / BCRC 13528 / IAM 13628 / NBRC 14792 / USDA 110) protein is Glucans biosynthesis glucosyltransferase H.